Here is a 186-residue protein sequence, read N- to C-terminus: Putative transcriptional regulator encoded by LINC00473 (186 aa).

The interval Met-1–Ala-62 is disordered. Residues Phe-18 to Met-40 show a composition bias toward basic and acidic residues.

Functionally, may play a role in cAMP-mediated gene transcription. The polypeptide is Putative transcriptional regulator encoded by LINC00473 (LINC00473) (Homo sapiens (Human)).